The sequence spans 202 residues: MMIIVMLLLSYLIGAFPSGFVIGKLFFKKDIRQFGSGNTGATNSFRVLGRPAGFLVTFLDIFKGFITVFFPLWLQVHADGPISTFFTNGLIVGLFAILGHVYPVYLKFQGGKAVATSAGVVLGVNPILLLILAIIFFIVLKIFKYVSLASIVAAICCVIGSLIIQDYILLVVSFLVSIILIIRHRSNIARIFRGEEPKIKWM.

6 helical membrane-spanning segments follow: residues 2–22, 54–74, 85–105, 120–140, 141–161, and 162–182; these read MIIV…GFVI, FLVT…PLWL, FFTN…YPVY, VVLG…FIVL, KIFK…VIGS, and LIIQ…ILII.

The protein belongs to the PlsY family. Probably interacts with PlsX.

The protein localises to the cell membrane. The enzyme catalyses an acyl phosphate + sn-glycerol 3-phosphate = a 1-acyl-sn-glycero-3-phosphate + phosphate. The protein operates within lipid metabolism; phospholipid metabolism. Functionally, catalyzes the transfer of an acyl group from acyl-phosphate (acyl-PO(4)) to glycerol-3-phosphate (G3P) to form lysophosphatidic acid (LPA). This enzyme utilizes acyl-phosphate as fatty acyl donor, but not acyl-CoA or acyl-ACP. The chain is Glycerol-3-phosphate acyltransferase from Staphylococcus aureus (strain USA300).